The chain runs to 121 residues: Large ribosomal subunit protein bL12 (121 aa).

Belongs to the bacterial ribosomal protein bL12 family. In terms of assembly, homodimer. Part of the ribosomal stalk of the 50S ribosomal subunit. Forms a multimeric L10(L12)X complex, where L10 forms an elongated spine to which 2 to 4 L12 dimers bind in a sequential fashion. Binds GTP-bound translation factors.

Its function is as follows. Forms part of the ribosomal stalk which helps the ribosome interact with GTP-bound translation factors. Is thus essential for accurate translation. The sequence is that of Large ribosomal subunit protein bL12 from Proteus mirabilis (strain HI4320).